Reading from the N-terminus, the 124-residue chain is Small ribosomal subunit protein uS13 (124 aa).

The interval 95–124 (GLPVRGQRTKTNARTRKGPKRTIAGKKKAR) is disordered.

Belongs to the universal ribosomal protein uS13 family. Part of the 30S ribosomal subunit. Forms a loose heterodimer with protein S19. Forms two bridges to the 50S subunit in the 70S ribosome.

Its function is as follows. Located at the top of the head of the 30S subunit, it contacts several helices of the 16S rRNA. In the 70S ribosome it contacts the 23S rRNA (bridge B1a) and protein L5 of the 50S subunit (bridge B1b), connecting the 2 subunits; these bridges are implicated in subunit movement. Contacts the tRNAs in the A and P-sites. The sequence is that of Small ribosomal subunit protein uS13 from Mycolicibacterium smegmatis (strain ATCC 700084 / mc(2)155) (Mycobacterium smegmatis).